Reading from the N-terminus, the 443-residue chain is MQRRDDPAARLTRSSGRSCSKDPSGAHPSVRLTPSRPSPLPHRSRGGGGGPRGGARASPATQPPPLLPPSNPGPDATVVGSAPTPLLPPSATAAAKMEPENKYLPELMAEKDSLDPSFTHAMQLLSVEIEKIQKGESKKDDEENYLDLFSHKNMKLKERVLIPVKQYPKFNFVGKILGPQGNTIKRLQEETGAKISVLGKGSMRDKAKEEELRKGGDPKYAHLNMDLHVFIEVFGPPCEAYALMAHAMEEVKKFLVPDMMDDICQEQFLELSYLNGVPEPSRGRGVSVRGRGAAPPPPPVPRGRGVGPPRGALVRGTPVRGSITRGATVTRGVPPPPTVRGAPTPRARTAGIQRIPLPPTPAPETYEDYGYDDSYAEQSYEGYEGYYSQSQGESEYYDYGHGELQDSYEAYGQDDWNGTRPSLKAPPARPVKGAYREHPYGRY.

The tract at residues 1 to 95 is disordered; that stretch reads MQRRDDPAAR…LLPPSATAAA (95 aa). Phosphoserine occurs at positions 18 and 20. Residue Lys21 is modified to N6-acetyllysine. Ser29 carries the post-translational modification Phosphoserine. Phosphothreonine is present on Thr33. Arg45 and Arg52 each carry asymmetric dimethylarginine; by PRMT1. At Ser58 the chain carries Phosphoserine. A compositionally biased stretch (pro residues) spans 61-72; that stretch reads TQPPPLLPPSNP. Low complexity predominate over residues 81-95; sequence SAPTPLLPPSATAAA. Thr84 bears the Phosphothreonine; by MAPK1 mark. Glycyl lysine isopeptide (Lys-Gly) (interchain with G-Cter in SUMO2) cross-links involve residues Lys96 and Lys102. Residues 100-260 are involved in homodimerization; that stretch reads ENKYLPELMA…VKKFLVPDMM (161 aa). Ser113 bears the Phosphoserine mark. A Glycyl lysine isopeptide (Lys-Gly) (interchain with G-Cter in SUMO2) cross-link involves residue Lys139. Ser150 is modified (phosphoserine). The region spanning 171-197 is the KH domain; sequence NFVGKILGPQGNTIKRLQEETGAKISV. Lys175 is modified (N6-acetyllysine; alternate). Lys175 is covalently cross-linked (Glycyl lysine isopeptide (Lys-Gly) (interchain with G-Cter in SUMO2); alternate). Thr183 carries the post-translational modification Phosphothreonine. The segment at 280–317 is disordered; that stretch reads PSRGRGVSVRGRGAAPPPPPVPRGRGVGPPRGALVRGT. An omega-N-methylarginine mark is found at Arg282, Arg284, and Arg291. A compositionally biased stretch (low complexity) spans 283-293; it reads GRGVSVRGRGA. Residue Arg304 is modified to Asymmetric dimethylarginine; by PRMT1. Positions 307-316 are enriched in low complexity; it reads GPPRGALVRG. An omega-N-methylarginine; by PRMT1 mark is found at Arg310 and Arg315. A Dimethylated arginine; alternate modification is found at Arg320. Residue Arg320 is modified to Omega-N-methylarginine; by PRMT1; alternate. Residue Arg325 is modified to Omega-N-methylarginine; by PRMT1. Residues 326–345 are disordered; it reads GATVTRGVPPPPTVRGAPTP. Dimethylated arginine; alternate occurs at positions 331 and 340. Residues Arg331 and Arg340 each carry the omega-N-methylarginine; by PRMT1; alternate modification. The residue at position 331 (Arg331) is an Asymmetric dimethylarginine; alternate. Positions 351–443 are interaction with HNRNPA1; the sequence is GIQRIPLPPT…AYREHPYGRY (93 aa). Tyr387 bears the Phosphotyrosine mark. Ser390 carries the post-translational modification Phosphoserine. The interaction with ZBTB7A stretch occupies residues 400-420; that stretch reads GHGELQDSYEAYGQDDWNGTR. Positions 411–443 are disordered; sequence YGQDDWNGTRPSLKAPPARPVKGAYREHPYGRY. Residue Lys432 forms a Glycyl lysine isopeptide (Lys-Gly) (interchain with G-Cter in SUMO2) linkage. Residues 434 to 443 show a composition bias toward basic and acidic residues; that stretch reads AYREHPYGRY. A phosphotyrosine; by PTK6 mark is found at Tyr435, Tyr440, and Tyr443.

This sequence belongs to the KHDRBS family. As to quaternary structure, self-associates to form homooligomers when bound to RNA, oligomerization appears to be limited when binding to proteins. Interacts with KHDRBS3/SLIM-2. Forms a trimeric complex in the nucleus consisting of BANP, HDAC6 and KHDRBS1/SAM68; HDAC6 keeps KHDRBS1 in a deacetylated state which inhibits the inclusion of CD44 alternate exons. The complex is disrupted by MAPK1/MAPK3-mediated phosphorylation of BANP which results in BANP export to the cytoplasm. This facilitates acetylation of KHDRBS1 and CD44 variant exon inclusion. Interacts with KHDRBS2/SLIM-1; heterooligomer formation of KHDRBS family proteins may modulate RNA substrate specificity. Interacts with PIK3R1, PLCG1. Interacts with RASA1, GRB2, SRC, CBP, PRMT1, APC, HNRNPA1. Interacts with PTK6 (via SH3 and SH2 domains). Forms a complex with ILF2, ILF3, YLPM1, RBMX, NCOA5 and PPP1CA. Binds WBP4/FBP21 (via WW domains), FNBP4/FBP30 (via WW domains). Interacts (via Arg/Gly-rich-flanked Pro-rich regions) with FYN (via the SH3 domain). Interacts with the non-receptor tyrosine kinase SRMS; the interaction leads to phosphorylation of KHDRBS1. Interacts with ZBTB7A; negatively regulates KHDRBS1 splicing activity toward BCL2L1. In terms of processing, tyrosine phosphorylated by several non-receptor tyrosine kinases including LCK, FYN and JAK3. Also tyrosine phosphorylated by the non-receptor tyrosine kinase SRMS in an EGF-dependent manner. Phosphorylation by PTK6 negatively regulates its RNA binding ability. Phosphorylation by PTK6 at Tyr-440 dictates the nuclear localization of KHDRBS1. Acetylated. Positively correlates with ability to bind RNA. Deacetylated by HDAC6; this regulates alternative splicing by inhibiting the inclusion of CD44 alternate exons. Post-translationally, arginine methylation is required for nuclear localization, Inhibits interaction with Src-like SH3 domains, but not interaction with WW domains of WBP4/FBP21 and FNBP4/FBP30.

The protein localises to the nucleus. Its subcellular location is the cytoplasm. It localises to the membrane. Recruited and tyrosine phosphorylated by several receptor systems, for example the T-cell, leptin and insulin receptors. Once phosphorylated, functions as an adapter protein in signal transduction cascades by binding to SH2 and SH3 domain-containing proteins. Role in G2-M progression in the cell cycle. Represses CBP-dependent transcriptional activation apparently by competing with other nuclear factors for binding to CBP. Also acts as a putative regulator of mRNA stability and/or translation rates and mediates mRNA nuclear export. Positively regulates the association of constitutive transport element (CTE)-containing mRNA with large polyribosomes and translation initiation. May not be involved in the nucleocytoplasmic export of unspliced (CTE)-containing RNA species. RNA-binding protein that plays a role in the regulation of alternative splicing and influences mRNA splice site selection and exon inclusion. Binds to RNA containing 5'-[AU]UAA-3' as a bipartite motif spaced by more than 15 nucleotides. Binds poly(A). Can regulate CD44 alternative splicing in a Ras pathway-dependent manner. In cooperation with HNRNPA1 modulates alternative splicing of BCL2L1 by promoting splicing toward isoform Bcl-X(S), and of SMN1. Can regulate alternative splicing of NRXN1 and NRXN3 in the laminin G-like domain 6 containing the evolutionary conserved neurexin alternative spliced segment 4 (AS4) involved in neurexin selective targeting to postsynaptic partners. In a neuronal activity-dependent manner cooperates synergistically with KHDRBS2/SLIM-1 in regulation of NRXN1 exon skipping at AS4. The cooperation with KHDRBS2/SLIM-1 is antagonistic for regulation of NXRN3 alternative splicing at AS4. The polypeptide is KH domain-containing, RNA-binding, signal transduction-associated protein 1 (Rattus norvegicus (Rat)).